Consider the following 162-residue polypeptide: Protein hcp1 (162 aa).

The protein belongs to the hcp1 family. In terms of assembly, hexamer. Three hcp1 monomers form two closely related hexameric rings with a 40 Angstrom internal diameter.

Its subcellular location is the secreted. Required for assembly of the protein secretion apparatus HSI-I. Actively secreted during chronic infection of cystic fibrosis patients. The chain is Protein hcp1 (hcp1) from Pseudomonas aeruginosa (strain ATCC 15692 / DSM 22644 / CIP 104116 / JCM 14847 / LMG 12228 / 1C / PRS 101 / PAO1).